Reading from the N-terminus, the 142-residue chain is 3-hydroxyacyl-[acyl-carrier-protein] dehydratase FabZ (142 aa).

His48 is a catalytic residue.

Belongs to the thioester dehydratase family. FabZ subfamily.

Its subcellular location is the cytoplasm. It carries out the reaction a (3R)-hydroxyacyl-[ACP] = a (2E)-enoyl-[ACP] + H2O. In terms of biological role, involved in unsaturated fatty acids biosynthesis. Catalyzes the dehydration of short chain beta-hydroxyacyl-ACPs and long chain saturated and unsaturated beta-hydroxyacyl-ACPs. The sequence is that of 3-hydroxyacyl-[acyl-carrier-protein] dehydratase FabZ from Anoxybacillus flavithermus (strain DSM 21510 / WK1).